The following is a 71-amino-acid chain: Putative membrane protein insertion efficiency factor (71 aa).

Belongs to the UPF0161 family.

Its subcellular location is the cell membrane. Could be involved in insertion of integral membrane proteins into the membrane. The sequence is that of Putative membrane protein insertion efficiency factor from Ruminiclostridium cellulolyticum (strain ATCC 35319 / DSM 5812 / JCM 6584 / H10) (Clostridium cellulolyticum).